A 425-amino-acid polypeptide reads, in one-letter code: Trigger factor (425 aa).

Positions 158–231 constitute a PPIase FKBP-type domain; the sequence is GDLVRVNMEV…VEEVYKRTLP (74 aa).

This sequence belongs to the FKBP-type PPIase family. Tig subfamily.

It localises to the cytoplasm. It catalyses the reaction [protein]-peptidylproline (omega=180) = [protein]-peptidylproline (omega=0). Involved in protein export. Acts as a chaperone by maintaining the newly synthesized protein in an open conformation. Functions as a peptidyl-prolyl cis-trans isomerase. In Thermotoga petrophila (strain ATCC BAA-488 / DSM 13995 / JCM 10881 / RKU-1), this protein is Trigger factor.